We begin with the raw amino-acid sequence, 447 residues long: Dimethylsulfoniopropionate lyase DddP (447 aa).

A disordered region spans residues 1 to 26; sequence MNRHFNATRKIDPSRGATLGDGSPND. The a divalent metal cation site is built by Asp-295, Asp-297, Asp-307, His-371, Glu-406, and Glu-421.

Belongs to the peptidase M24B family. Homodimer. The cofactor is a divalent metal cation.

It catalyses the reaction S,S-dimethyl-beta-propiothetin = acrylate + dimethyl sulfide + H(+). Able to cleave dimethylsulfoniopropionate (DMSP), releasing dimethyl sulfide (DMS). DMS is the principal form by which sulfur is transported from oceans to the atmosphere. The real activity of the protein is however subject to debate and it is unclear whether it constitutes a real dimethylsulfoniopropionate lyase in vivo: the low activity with DMSP as substrate suggests that DMSP is not its native substrate. The chain is Dimethylsulfoniopropionate lyase DddP from Roseobacter denitrificans (strain ATCC 33942 / OCh 114) (Erythrobacter sp. (strain OCh 114)).